A 358-amino-acid polypeptide reads, in one-letter code: Pre-mRNA-splicing factor spp2 (358 aa).

Disordered stretches follow at residues 1–250 (MTDQ…RAVP) and 298–358 (AWNQ…RGDR). Positions 24 to 40 (KTKKPSRPTHTRRHHAR) are enriched in basic residues. Composition is skewed to basic and acidic residues over residues 80–137 (LENR…DASR) and 145–160 (RSRDRDHKPKDPKDLQ). Over residues 174–185 (NPKSTTTATSSF) the composition is skewed to polar residues. Basic and acidic residues-rich tracts occupy residues 233-246 (SSHDRDRSPDHSDY) and 309-358 (GDSR…RGDR).

Belongs to the SPP2 family. Associated with the spliceosome.

The protein resides in the nucleus. In terms of biological role, involved in spliceosome maturation and the first step of pre-mRNA splicing. The chain is Pre-mRNA-splicing factor spp2 (msp-40) from Neurospora crassa (strain ATCC 24698 / 74-OR23-1A / CBS 708.71 / DSM 1257 / FGSC 987).